The chain runs to 180 residues: Adenine phosphoribosyltransferase (180 aa).

It belongs to the purine/pyrimidine phosphoribosyltransferase family. In terms of assembly, homodimer.

Its subcellular location is the cytoplasm. It carries out the reaction AMP + diphosphate = 5-phospho-alpha-D-ribose 1-diphosphate + adenine. It participates in purine metabolism; AMP biosynthesis via salvage pathway; AMP from adenine: step 1/1. In terms of biological role, catalyzes a salvage reaction resulting in the formation of AMP, that is energically less costly than de novo synthesis. The polypeptide is Adenine phosphoribosyltransferase (Mycolicibacterium paratuberculosis (strain ATCC BAA-968 / K-10) (Mycobacterium paratuberculosis)).